The chain runs to 1131 residues: Probable chloride channel protein UM03490-D (1131 aa).

12 helical membrane passes run 137-157, 206-226, 305-325, 341-361, 380-397, 414-434, 485-505, 518-538, 577-597, 603-623, 643-663, and 680-702; these read GVIV…SLAT, VTVT…PILP, FPAW…CAHL, IKCI…TLAI, GPAV…ASFF, SSAA…LFSL, FEIM…AFVI, YLVK…AFVG, MVNS…VSYG, GIFV…GILV, VPCI…LAGV, and ALTY…DWFS. Disordered stretches follow at residues 815–835 and 858–928; these read DGVE…LSVA and ATGA…AGGG. The span at 866-877 shows a compositional bias: low complexity; it reads GLGSTSATGVAS. In terms of domain architecture, CBS spans 944–1000; it reads IDPTPLIVQPGMPLETVMDMFKNLGPRVILVVEYGRLSGLVTVKDVLKRIAMQEKAE. The span at 1061-1078 shows a compositional bias: low complexity; it reads RASASRGGAPGSQAGQAR. Residues 1061–1131 form a disordered region; it reads RASASRGGAP…VLGAQDDDDE (71 aa). Positions 1104 to 1113 are enriched in polar residues; it reads STRQTSATKN.

It belongs to the chloride channel (TC 2.A.49) family.

The protein localises to the membrane. Functionally, voltage-gated chloride channel. The sequence is that of Probable chloride channel protein UM03490-D from Mycosarcoma maydis (Corn smut fungus).